A 69-amino-acid chain; its full sequence is Sec-independent protein translocase protein TatA (69 aa).

A helical membrane pass occupies residues 1–21; it reads MFGLGGQELILILLIILLLFG.

The protein belongs to the TatA/E family. In terms of assembly, forms a complex with TatC.

It is found in the cell inner membrane. Functionally, part of the twin-arginine translocation (Tat) system that transports large folded proteins containing a characteristic twin-arginine motif in their signal peptide across membranes. TatA could form the protein-conducting channel of the Tat system. This chain is Sec-independent protein translocase protein TatA, found in Pelodictyon phaeoclathratiforme (strain DSM 5477 / BU-1).